A 446-amino-acid chain; its full sequence is Histidine--tRNA ligase (446 aa).

This sequence belongs to the class-II aminoacyl-tRNA synthetase family. In terms of assembly, homodimer.

Its subcellular location is the cytoplasm. It catalyses the reaction tRNA(His) + L-histidine + ATP = L-histidyl-tRNA(His) + AMP + diphosphate + H(+). The polypeptide is Histidine--tRNA ligase (Burkholderia pseudomallei (strain 1710b)).